A 554-amino-acid chain; its full sequence is Asparagine synthetase B [glutamine-hydrolyzing] (554 aa).

Residue Cys2 is the For GATase activity of the active site. One can recognise a Glutamine amidotransferase type-2 domain in the interval 2 to 186; sequence CSIFGVFDIK…AGSYLWSQDG (185 aa). Residues 50-54, 75-77, and Asp99 contribute to the L-glutamine site; these read RLSIV and NGE. ATP contacts are provided by residues Leu233, Val273, and 347-348; that span reads SG.

The protein belongs to the asparagine synthetase family. Homodimer.

The catalysed reaction is L-aspartate + L-glutamine + ATP + H2O = L-asparagine + L-glutamate + AMP + diphosphate + H(+). It participates in amino-acid biosynthesis; L-asparagine biosynthesis; L-asparagine from L-aspartate (L-Gln route): step 1/1. With respect to regulation, glutamine-dependent asparagine synthesis activity can be inhibited by aspartic acid analogs (such as a sulfinate derivative and (2S,3R)-2-amino-3-methylsuccinate) in vitro; the inhibition is competitive with respect to aspartate. In terms of biological role, catalyzes the ATP-dependent conversion of aspartate into asparagine, using glutamine as a source of nitrogen. Can also use ammonia as the nitrogen source in vitro, albeit with lower efficiency. As nucleotide substrates, ATP and dATP are utilized at a similar rate in both the glutamine- and ammonia-dependent reactions, whereas GTP utilization is only 15% that of ATP, and CTP, UTP, ITP and XTP are very poor or not substrates. Also exhibits glutaminase activity. The protein is Asparagine synthetase B [glutamine-hydrolyzing] (asnB) of Escherichia coli (strain K12).